The sequence spans 213 residues: tRNA (guanine-N(7)-)-methyltransferase (213 aa).

The S-adenosyl-L-methionine site is built by Asp-40, Glu-65, Asn-92, and Asp-118. Asp-118 is a catalytic residue. Substrate-binding residues include Lys-122 and Asp-154.

It belongs to the class I-like SAM-binding methyltransferase superfamily. TrmB family.

It catalyses the reaction guanosine(46) in tRNA + S-adenosyl-L-methionine = N(7)-methylguanosine(46) in tRNA + S-adenosyl-L-homocysteine. It participates in tRNA modification; N(7)-methylguanine-tRNA biosynthesis. Functionally, catalyzes the formation of N(7)-methylguanine at position 46 (m7G46) in tRNA. This chain is tRNA (guanine-N(7)-)-methyltransferase, found in Synechococcus elongatus (strain ATCC 33912 / PCC 7942 / FACHB-805) (Anacystis nidulans R2).